A 482-amino-acid chain; its full sequence is Alanine aminotransferase 2 (482 aa).

The residue at position 299 (lysine 299) is an N6-(pyridoxal phosphate)lysine.

Belongs to the class-I pyridoxal-phosphate-dependent aminotransferase family. Alanine aminotransferase subfamily. In terms of assembly, homodimer. The cofactor is pyridoxal 5'-phosphate.

The catalysed reaction is L-alanine + 2-oxoglutarate = pyruvate + L-glutamate. It functions in the pathway photosynthesis; C4 acid pathway. Its pathway is amino-acid degradation; L-alanine degradation via transaminase pathway; pyruvate from L-alanine: step 1/1. Transfer of C3 units between the cytosol of mesophyll and bundle sheath cells to maintain a nitrogen-carbon balance in the C4-dicarboxylic pathway. The polypeptide is Alanine aminotransferase 2 (Hordeum vulgare (Barley)).